The chain runs to 368 residues: 3-isopropylmalate dehydrogenase (368 aa).

NAD(+) is bound at residue 79-91 (GPEWGTSSTVRPE). Substrate-binding residues include R98, R108, R137, and D226. The Mg(2+) site is built by D226, D251, and D255. 291–303 (GSAPDISGKGIVN) is a binding site for NAD(+).

Belongs to the isocitrate and isopropylmalate dehydrogenases family. As to quaternary structure, homodimer. It depends on Mg(2+) as a cofactor. The cofactor is Mn(2+).

Its subcellular location is the cytoplasm. It carries out the reaction (2R,3S)-3-isopropylmalate + NAD(+) = 4-methyl-2-oxopentanoate + CO2 + NADH. Its pathway is amino-acid biosynthesis; L-leucine biosynthesis; L-leucine from 3-methyl-2-oxobutanoate: step 3/4. Its function is as follows. Catalyzes the oxidation of 3-carboxy-2-hydroxy-4-methylpentanoate (3-isopropylmalate) to 3-carboxy-4-methyl-2-oxopentanoate. The product decarboxylates to 4-methyl-2 oxopentanoate. The polypeptide is 3-isopropylmalate dehydrogenase (leu-1) (Neurospora crassa (strain ATCC 24698 / 74-OR23-1A / CBS 708.71 / DSM 1257 / FGSC 987)).